A 30-amino-acid polypeptide reads, in one-letter code: Non-toxic phospholipase A2 (30 aa).

Residues Tyr26, Gly28, and Gly30 each coordinate Ca(2+).

Belongs to the phospholipase A2 family. Group I subfamily. Homodimer. Requires Ca(2+) as cofactor. Glycosylated. As to expression, expressed by the venom gland.

It is found in the secreted. It carries out the reaction a 1,2-diacyl-sn-glycero-3-phosphocholine + H2O = a 1-acyl-sn-glycero-3-phosphocholine + a fatty acid + H(+). With respect to regulation, enzymatic activity is diminished by Cd(2+) and Hg(2+). Its function is as follows. Relatively highly potent phospholipase A2 that displays potent antimicrobial and hemolytic activities. It does not show cytotoxic effects on the three human cell lines tested. PLA2 catalyzes the calcium-dependent hydrolysis of the 2-acyl groups in 3-sn-phosphoglycerides. It shows similar potencies on both Gram-negative and Gram-positive bacteria: B.cereus (MIC&gt;9 ug/ml), B.subtilis (MIC&gt;12 ug/ml), E.faecalis (MIC&gt;7 ug/ml), S.epidermidis (MIC&gt;12 ug/ml), S.aureux (MIC&gt;5 ug/ml), E.coli (MIC&gt;7 ug/ml), K.pneumonia (MIC&gt;8 ug/ml), P.aeruginosa (MIC&gt;10 ug/ml), and S.enteric (MIC&gt;9 ug/ml). It also shows antifungal activities: A.niger (MIC&gt;15 ug/ml), B.cinerea (MIC&gt;12 ug/ml), F.solani (MIC&gt;15 ug/ml), and P.digitatum (MIC&gt;10 ug/ml). The chain is Non-toxic phospholipase A2 from Walterinnesia aegyptia (Desert black snake).